The primary structure comprises 197 residues: Molybdenum cofactor guanylyltransferase (197 aa).

GTP-binding positions include 10 to 12 (LAG), Lys23, Asn51, Asp69, and Asp99. Residue Asp99 participates in Mg(2+) binding.

This sequence belongs to the MobA family. In terms of assembly, monomer. Requires Mg(2+) as cofactor.

It localises to the cytoplasm. The enzyme catalyses Mo-molybdopterin + GTP + H(+) = Mo-molybdopterin guanine dinucleotide + diphosphate. Its function is as follows. Transfers a GMP moiety from GTP to Mo-molybdopterin (Mo-MPT) cofactor (Moco or molybdenum cofactor) to form Mo-molybdopterin guanine dinucleotide (Mo-MGD) cofactor. The protein is Molybdenum cofactor guanylyltransferase of Shewanella sp. (strain MR-4).